We begin with the raw amino-acid sequence, 127 residues long: Large ribosomal subunit protein mL55 (127 aa).

A mitochondrion-targeting transit peptide spans 1–32 (MPLAILLSLLRHCGVRAALPTPRHLHTSPWRA). At Ser-84 the chain carries Phosphoserine.

It belongs to the mitochondrion-specific ribosomal protein mL55 family. Component of the mitochondrial ribosome large subunit (39S) which comprises a 16S rRNA and about 50 distinct proteins.

It localises to the mitochondrion. The protein is Large ribosomal subunit protein mL55 (Mrpl55) of Mus musculus (Mouse).